A 37-amino-acid chain; its full sequence is Cytochrome b6-f complex subunit 5 (37 aa).

A helical membrane pass occupies residues 5–25 (SLFGIVLGLIPITLAGLFVTA).

Belongs to the PetG family. As to quaternary structure, the 4 large subunits of the cytochrome b6-f complex are cytochrome b6, subunit IV (17 kDa polypeptide, PetD), cytochrome f and the Rieske protein, while the 4 small subunits are PetG, PetL, PetM and PetN. The complex functions as a dimer.

Its subcellular location is the plastid. The protein resides in the chloroplast thylakoid membrane. Its function is as follows. Component of the cytochrome b6-f complex, which mediates electron transfer between photosystem II (PSII) and photosystem I (PSI), cyclic electron flow around PSI, and state transitions. PetG is required for either the stability or assembly of the cytochrome b6-f complex. In Arabis hirsuta (Hairy rock-cress), this protein is Cytochrome b6-f complex subunit 5.